Here is a 375-residue protein sequence, read N- to C-terminus: GDP-mannose transporter GONST2 (375 aa).

The next 9 helical transmembrane spans lie at 79 to 99, 112 to 132, 141 to 161, 165 to 185, 199 to 219, 262 to 282, 300 to 320, 327 to 347, and 349 to 369; these read LVSG…NKIV, MLYQ…SGVV, LIRV…SGMY, YINV…TGIG, WAAM…DLTF, MVLL…ILLG, VVAT…MWFL, TYSL…LVLF, and VPLS…GVVF.

Belongs to the nucleotide-sugar transporter family. GDP-Mannose:GMP antiporter (GMA) (TC 2.A.7.13) subfamily. In terms of tissue distribution, expressed in rosette leaves, stems, flowers and siliques.

Its subcellular location is the golgi apparatus membrane. Functionally, GDP-mannose transporter that may be involved in the import of GDP-mannose from the cytoplasm into the Golgi lumen. The chain is GDP-mannose transporter GONST2 from Arabidopsis thaliana (Mouse-ear cress).